The sequence spans 382 residues: ATP phosphoribosyltransferase regulatory subunit (382 aa).

It belongs to the class-II aminoacyl-tRNA synthetase family. HisZ subfamily. Heteromultimer composed of HisG and HisZ subunits.

The protein resides in the cytoplasm. Its pathway is amino-acid biosynthesis; L-histidine biosynthesis; L-histidine from 5-phospho-alpha-D-ribose 1-diphosphate: step 1/9. In terms of biological role, required for the first step of histidine biosynthesis. May allow the feedback regulation of ATP phosphoribosyltransferase activity by histidine. The protein is ATP phosphoribosyltransferase regulatory subunit of Burkholderia vietnamiensis (strain G4 / LMG 22486) (Burkholderia cepacia (strain R1808)).